Reading from the N-terminus, the 1169-residue chain is ATP-dependent helicase/deoxyribonuclease subunit B (1169 aa).

The UvrD-like helicase ATP-binding domain occupies 1–296; it reads MTLRIVSGRS…QHVEANFANM (296 aa). Position 8–15 (8–15) interacts with ATP; it reads GRSGTGKS. A UvrD-like helicase C-terminal domain is found at 276 to 582; it reads YYTQRFQSED…EFSRIPPTLD (307 aa). Residues Cys-804, Cys-1129, Cys-1132, and Cys-1138 each contribute to the [4Fe-4S] cluster site.

The protein belongs to the helicase family. AddB/RexB type 1 subfamily. As to quaternary structure, heterodimer of AddA and AddB. Requires Mg(2+) as cofactor. [4Fe-4S] cluster is required as a cofactor.

Its function is as follows. The heterodimer acts as both an ATP-dependent DNA helicase and an ATP-dependent, dual-direction single-stranded exonuclease. Recognizes the chi site generating a DNA molecule suitable for the initiation of homologous recombination. The AddB subunit has 5' -&gt; 3' nuclease activity but not helicase activity. In Lysinibacillus sphaericus (strain C3-41), this protein is ATP-dependent helicase/deoxyribonuclease subunit B.